The chain runs to 138 residues: 1,4-dihydroxy-2-naphthoyl-CoA hydrolase (138 aa).

Residue D14 is part of the active site.

The protein belongs to the 4-hydroxybenzoyl-CoA thioesterase family. DHNA-CoA hydrolase subfamily.

The catalysed reaction is 1,4-dihydroxy-2-naphthoyl-CoA + H2O = 1,4-dihydroxy-2-naphthoate + CoA + H(+). The protein operates within cofactor biosynthesis; phylloquinone biosynthesis. Its pathway is quinol/quinone metabolism; 1,4-dihydroxy-2-naphthoate biosynthesis; 1,4-dihydroxy-2-naphthoate from chorismate: step 7/7. Functionally, catalyzes the hydrolysis of 1,4-dihydroxy-2-naphthoyl-CoA (DHNA-CoA) to 1,4-dihydroxy-2-naphthoate (DHNA), a reaction involved in phylloquinone (vitamin K1) biosynthesis. The chain is 1,4-dihydroxy-2-naphthoyl-CoA hydrolase from Rippkaea orientalis (strain PCC 8801 / RF-1) (Cyanothece sp. (strain PCC 8801)).